The chain runs to 1412 residues: MNTKVSRQYAKISENSIQKISLALATPEDVLEWSRGEVHRPETINYKTFKPERGGLFDELIFGPLVDYKCSVCGRKYRKSNENQLCIATKECKIRGSRILSKMARRYSMGHIALNAPILHFWFFKIDHSIIAKLLGLKVFEGNSKVPTTITKAAIENLIYYKSHIVLETGGLKSLEQNKIIDISEAGLIYKNALIEIIEFYPPGSEEHNALAESISELADVTSSKIGREYGVDYYELNEIIEEFSSARIATGALAIEYLLDKIDLRAEKAAVEAELAGVQKQIYKNKKIILKNQKRDKLYKRLQVINAFINSGQDPKMMIIRNLPVIPADLRPLVQLDGSRHSTSDCNELYRRIIIRNNRLKRWKAAHAPVIIIQNEMRMLQEAVDALIDNQKKSTNQVTTKEGRPLKSISDALTGKKGRFRQNLLGKRVDYSGRSVIVVGPKLKMHQAGLPRKMAAVLFEPWIIRNLIQEKKVGSIKMARKMIEEENPIIWPHVAKVIQNKPIILNRAPTLHRLSIQAFEPVLVRAKAIQLHPLVTAGFNADFDGDQMAVHIPISPEAIRETQELMFADKNILGPKDGEPIVNPSQDMVLGLYYLSQEKAGAKGEGSFFSTYEAMLKAYEFRSVELHARVVLPFEQVKPFIAKTMRGHLISTVGKFILNNIFPANFPFIFDDNVDELELNYPSQIKKYVLPYGTNFREYIQNLKVNEPLNKKAIAKIVRQIFDTYDGLLAKEDIATVIDQLDFGNYQNCVLRYEKLRDYKKQKLPVPHLSKLSEFTIFEYSQLYKQLQQNGPVESYRVLEDHEKAELLEKIWFKYNNMVCSILDKIKDLGFHYSTLSGTSIAISDIKMAPKKHEFIKEGENYINKLNTFYAKGLITDDERYVLAIAKWTQIKNDIQEDLNQSIKDDNQNSLVMMMKSGARGNISNFVQLAGMRGLMANNVKALKVDAENERVVRSIVEVPVKSSFLEGLTSFEFYSSTHGARKGLTDTALNTAKSGYLTRRLVDVAQNIVVVAEDCFSDFGFVVKDIIDTKTNTIIVPLLERIEGRFLNKDVYDSRGIKLASAGTMVDLQTAKKIVAAGIKKVEIRSILSCHIKNSVCKKCYGKDLATNRLVSIGEAVGIIAAQSIGEPGTQLTMRTFHTGGVANVEDITGGFTRLIELIDSHEHPWGKPAKISPYYGIITKISDLAEKNAANKGFLITIEYKTSKNEKAEHIIRIEQSQKLRVKVGDKVIPGQKLVEGPIILKELLAVSDARTLQNYLLKEIQRIYRMQGISISDKYIEIIIRQMLSKVQIIENGDSNFFIGSIVDISDYQEVNGQLISQNKNPAFGNVIVKGAKQIPLLSNSFLAAASYQETSKILVHSVISSQIDKLEGLKENIIVGHKIPAGTNSNYEPKSKFDIRNPLSFFMKNNR.

Positions 543, 545, and 547 each coordinate Mg(2+). Residues C1017, C1092, C1099, and C1102 each coordinate Zn(2+).

It belongs to the RNA polymerase beta' chain family. As to quaternary structure, the RNAP catalytic core consists of 2 alpha, 1 beta, 1 beta' and 1 omega subunit. When a sigma factor is associated with the core the holoenzyme is formed, which can initiate transcription. It depends on Mg(2+) as a cofactor. Requires Zn(2+) as cofactor.

It catalyses the reaction RNA(n) + a ribonucleoside 5'-triphosphate = RNA(n+1) + diphosphate. DNA-dependent RNA polymerase catalyzes the transcription of DNA into RNA using the four ribonucleoside triphosphates as substrates. This Mesomycoplasma hyopneumoniae (strain J / ATCC 25934 / NCTC 10110) (Mycoplasma hyopneumoniae) protein is DNA-directed RNA polymerase subunit beta'.